The chain runs to 166 residues: Cofilin-1 (166 aa).

The residue at position 2 (alanine 2) is an N-acetylalanine. Serine 3 and serine 8 each carry phosphoserine. The 150-residue stretch at glycine 4–leucine 153 folds into the ADF-H domain. Lysine 13 is subject to N6-acetyllysine. The residue at position 25 (threonine 25) is a Phosphothreonine. A Nuclear localization signal motif is present at residues lysine 30 to lysine 34. Residue serine 41 is modified to Phosphoserine. Tyrosine 68 carries the post-translational modification Phosphotyrosine. Position 73 is an N6-acetyllysine (lysine 73). Lysine 132 participates in a covalent cross-link: Glycyl lysine isopeptide (Lys-Gly) (interchain with G-Cter in SUMO2). Tyrosine 140 carries the post-translational modification Phosphotyrosine. Lysine 144 carries the N6-acetyllysine modification. Serine 156 bears the Phosphoserine mark.

Belongs to the actin-binding proteins ADF family. As to quaternary structure, can bind G- and F-actin in a 1:1 ratio of cofilin to actin. It is a major component of intranuclear and cytoplasmic actin rods. Interacts with the subcortical maternal complex (SCMC) via interaction with TLE6 and NLRP5. Interacts with C9orf72. Inactivated by phosphorylation on Ser-3. Phosphorylated on Ser-3 in resting cells. Dephosphorylated by PDXP/chronophin; this restores its activity in promoting actin filament depolymerization. The phosphorylation of Ser-24 may prevent recognition of the nuclear localization signal. Phosphorylated via a ARRB1-RAC1-LIMK1-PAK1 cascade upon active ligand stimulation of atypical chemokine receptor ACKR2.

It is found in the nucleus matrix. The protein localises to the cytoplasm. The protein resides in the cytoskeleton. Its subcellular location is the cell projection. It localises to the ruffle membrane. It is found in the lamellipodium membrane. The protein localises to the lamellipodium. The protein resides in the growth cone. Its subcellular location is the axon. Its function is as follows. Binds to F-actin and exhibits pH-sensitive F-actin depolymerizing activity. Important for normal progress through mitosis and normal cytokinesis. In conjunction with the subcortical maternal complex (SCMC), plays an essential role for zygotes to progress beyond the first embryonic cell divisions via regulation of actin dynamics. Required for the centralization of the mitotic spindle and symmetric division of zygotes. Plays a role in the regulation of cell morphology and cytoskeletal organization in epithelial cells. Required for the up-regulation of atypical chemokine receptor ACKR2 from endosomal compartment to cell membrane, increasing its efficiency in chemokine uptake and degradation. Required for neural tube morphogenesis and neural crest cell migration. The chain is Cofilin-1 (CFL1) from Bos taurus (Bovine).